Here is a 464-residue protein sequence, read N- to C-terminus: NADH dehydrogenase [ubiquinone] flavoprotein 1, mitochondrial (464 aa).

Residues 1-20 (MLAARRLLGGSLPSRVSVRF) constitute a mitochondrion transit peptide. Position 81 is an N6-acetyllysine; alternate (lysine 81). Lysine 81 bears the N6-succinyllysine; alternate mark. An NADH-binding site is contributed by 87–96 (GRGGAGFPTG). At lysine 104 the chain carries N6-acetyllysine. 199–247 (RGAGAYICGEETALIESIEGKQGKPRLKPPFPADVGVFGCPTTVANVET) is a binding site for FMN. Arginine 257 bears the Omega-N-methylarginine mark. The residue at position 375 (lysine 375) is an N6-acetyllysine. 4 residues coordinate [4Fe-4S] cluster: cysteine 379, cysteine 382, cysteine 385, and cysteine 425.

Belongs to the complex I 51 kDa subunit family. As to quaternary structure, core subunit of respiratory chain NADH dehydrogenase (Complex I) which is composed of 45 different subunits. This is a component of the flavoprotein-sulfur (FP) fragment of the enzyme. Interacts with RAB5IF. Requires FMN as cofactor. [4Fe-4S] cluster serves as cofactor.

It localises to the mitochondrion inner membrane. The catalysed reaction is a ubiquinone + NADH + 5 H(+)(in) = a ubiquinol + NAD(+) + 4 H(+)(out). Core subunit of the mitochondrial membrane respiratory chain NADH dehydrogenase (Complex I) which catalyzes electron transfer from NADH through the respiratory chain, using ubiquinone as an electron acceptor. Part of the peripheral arm of the enzyme, where the electrons from NADH are accepted by flavin mononucleotide (FMN) and then passed along a chain of iron-sulfur clusters by electron tunnelling to the final acceptor ubiquinone. Contains FMN, which is the initial electron acceptor as well as one iron-sulfur cluster. The protein is NADH dehydrogenase [ubiquinone] flavoprotein 1, mitochondrial of Macaca fascicularis (Crab-eating macaque).